A 61-amino-acid chain; its full sequence is Large ribosomal subunit protein uL30 (61 aa).

The protein belongs to the universal ribosomal protein uL30 family. As to quaternary structure, part of the 50S ribosomal subunit.

In Exiguobacterium sibiricum (strain DSM 17290 / CCUG 55495 / CIP 109462 / JCM 13490 / 255-15), this protein is Large ribosomal subunit protein uL30.